Reading from the N-terminus, the 286-residue chain is Acyl-CoA-binding domain-containing protein 6 (286 aa).

The ACB domain maps to 32–117; the sequence is LQCQFEQAAK…VKKLDPDWSP (86 aa). An acyl-CoA contacts are provided by residues 59–63, Lys85, and Tyr104; that span reads YARYK. ANK repeat units follow at residues 182 to 211 and 215 to 244; these read EGRS…HINM and EGQT…DPSL.

It is found in the cytoplasm. It localises to the nucleus. Its function is as follows. Binds long-chain acyl-coenzyme A molecules with a strong preference for unsaturated C18:1-CoA. Does not bind fatty acids. Plays a role in protein N-myristoylation. The polypeptide is Acyl-CoA-binding domain-containing protein 6 (acbd6) (Xenopus laevis (African clawed frog)).